The primary structure comprises 61 residues: Sec-independent protein translocase protein TatA (61 aa).

Residues 1-21 form a helical membrane-spanning segment; sequence MFGLGITEILLILGIIILIFG.

This sequence belongs to the TatA/E family. In terms of assembly, the Tat system comprises two distinct complexes: a TatABC complex, containing multiple copies of TatA, TatB and TatC subunits, and a separate TatA complex, containing only TatA subunits. Substrates initially bind to the TatABC complex, which probably triggers association of the separate TatA complex to form the active translocon.

Its subcellular location is the cell inner membrane. In terms of biological role, part of the twin-arginine translocation (Tat) system that transports large folded proteins containing a characteristic twin-arginine motif in their signal peptide across membranes. TatA could form the protein-conducting channel of the Tat system. This chain is Sec-independent protein translocase protein TatA, found in Maridesulfovibrio salexigens (strain ATCC 14822 / DSM 2638 / NCIMB 8403 / VKM B-1763) (Desulfovibrio salexigens).